A 428-amino-acid polypeptide reads, in one-letter code: Glutamate-1-semialdehyde 2,1-aminomutase (428 aa).

Lysine 265 is subject to N6-(pyridoxal phosphate)lysine.

This sequence belongs to the class-III pyridoxal-phosphate-dependent aminotransferase family. HemL subfamily. In terms of assembly, homodimer. Pyridoxal 5'-phosphate serves as cofactor.

Its subcellular location is the cytoplasm. The enzyme catalyses (S)-4-amino-5-oxopentanoate = 5-aminolevulinate. Its pathway is porphyrin-containing compound metabolism; protoporphyrin-IX biosynthesis; 5-aminolevulinate from L-glutamyl-tRNA(Glu): step 2/2. The protein is Glutamate-1-semialdehyde 2,1-aminomutase of Thioalkalivibrio sulfidiphilus (strain HL-EbGR7).